The primary structure comprises 181 residues: Oligoribonuclease (181 aa).

The 164-residue stretch at 8 to 171 (LIWIDLEMTG…DDIRESVAEL (164 aa)) folds into the Exonuclease domain. The active site involves Tyr-129.

Belongs to the oligoribonuclease family.

Its subcellular location is the cytoplasm. Functionally, 3'-to-5' exoribonuclease specific for small oligoribonucleotides. The sequence is that of Oligoribonuclease from Salmonella choleraesuis (strain SC-B67).